A 198-amino-acid chain; its full sequence is NAD(P)H dehydrogenase (quinone) (198 aa).

Residues 6-190 enclose the Flavodoxin-like domain; sequence ILVLYYSRHG…LCRALGKRLA (185 aa). FMN-binding positions include 12–17, 79–81, 114–120, and histidine 135; these read SRHGAT, TRF, and STASLHG.

This sequence belongs to the WrbA family. Homodimer. It depends on FMN as a cofactor.

It catalyses the reaction a quinone + NADH + H(+) = a quinol + NAD(+). The catalysed reaction is a quinone + NADPH + H(+) = a quinol + NADP(+). The chain is NAD(P)H dehydrogenase (quinone) from Pseudomonas aeruginosa (strain ATCC 15692 / DSM 22644 / CIP 104116 / JCM 14847 / LMG 12228 / 1C / PRS 101 / PAO1).